The primary structure comprises 194 residues: Glycerol-3-phosphate acyltransferase (194 aa).

Helical transmembrane passes span 3 to 23, 47 to 67, 78 to 97, 112 to 132, and 153 to 173; these read IALL…LIVG, VLGK…GVLP, IHGI…PIYL, ILGV…TLLF, and LFFD…LIII.

It belongs to the PlsY family. In terms of assembly, probably interacts with PlsX.

The protein localises to the cell membrane. The catalysed reaction is an acyl phosphate + sn-glycerol 3-phosphate = a 1-acyl-sn-glycero-3-phosphate + phosphate. Its pathway is lipid metabolism; phospholipid metabolism. Catalyzes the transfer of an acyl group from acyl-phosphate (acyl-PO(4)) to glycerol-3-phosphate (G3P) to form lysophosphatidic acid (LPA). This enzyme utilizes acyl-phosphate as fatty acyl donor, but not acyl-CoA or acyl-ACP. This chain is Glycerol-3-phosphate acyltransferase, found in Macrococcus caseolyticus (strain JCSC5402) (Macrococcoides caseolyticum).